Reading from the N-terminus, the 242-residue chain is Probable transcriptional regulatory protein BTH_I1015 (242 aa).

Belongs to the TACO1 family.

The protein localises to the cytoplasm. The polypeptide is Probable transcriptional regulatory protein BTH_I1015 (Burkholderia thailandensis (strain ATCC 700388 / DSM 13276 / CCUG 48851 / CIP 106301 / E264)).